A 409-amino-acid chain; its full sequence is NADH-ubiquinone oxidoreductase chain 4 (409 aa).

A run of 13 helical transmembrane segments spans residues 9–29 (LYFF…GFVA), 44–64 (SFSF…VLLS), 68–88 (FMLL…FVPS), 90–110 (VILM…MILG), 125–145 (IFYA…SFFF), 160–180 (VFVL…HLWL), 194–214 (LLAG…LGCL), 221–241 (VWIV…MFQS), 246–268 (LAAY…IIMS), 273–295 (GVIL…GEFY), 305–325 (YMSS…VVFL), 352–372 (FSFW…IYLL), and 389–409 (VGFS…SVFF).

It belongs to the complex I subunit 4 family.

It is found in the mitochondrion membrane. The enzyme catalyses a ubiquinone + NADH + 5 H(+)(in) = a ubiquinol + NAD(+) + 4 H(+)(out). Its function is as follows. Core subunit of the mitochondrial membrane respiratory chain NADH dehydrogenase (Complex I) that is believed to belong to the minimal assembly required for catalysis. Complex I functions in the transfer of electrons from NADH to the respiratory chain. The immediate electron acceptor for the enzyme is believed to be ubiquinone. The sequence is that of NADH-ubiquinone oxidoreductase chain 4 (ND4) from Ascaris suum (Pig roundworm).